Reading from the N-terminus, the 233-residue chain is Orotidine 5'-phosphate decarboxylase (233 aa).

Substrate is bound by residues Asp-11, Lys-34, 61 to 70 (DLKLHDIPNT), Thr-117, Arg-179, Gln-188, Gly-208, and Arg-209. Lys-63 acts as the Proton donor in catalysis.

This sequence belongs to the OMP decarboxylase family. Type 1 subfamily. Homodimer.

It catalyses the reaction orotidine 5'-phosphate + H(+) = UMP + CO2. The protein operates within pyrimidine metabolism; UMP biosynthesis via de novo pathway; UMP from orotate: step 2/2. Catalyzes the decarboxylation of orotidine 5'-monophosphate (OMP) to uridine 5'-monophosphate (UMP). In Streptococcus pneumoniae (strain JJA), this protein is Orotidine 5'-phosphate decarboxylase.